Here is a 180-residue protein sequence, read N- to C-terminus: Large ribosomal subunit protein uL6 (180 aa).

Belongs to the universal ribosomal protein uL6 family. Part of the 50S ribosomal subunit.

Its function is as follows. This protein binds to the 23S rRNA, and is important in its secondary structure. It is located near the subunit interface in the base of the L7/L12 stalk, and near the tRNA binding site of the peptidyltransferase center. This Dictyoglomus turgidum (strain DSM 6724 / Z-1310) protein is Large ribosomal subunit protein uL6.